Here is a 416-residue protein sequence, read N- to C-terminus: MLKRDMNIADYDAELFAAIQEETLRQEEHIELIASENYTSPRVMEAQGSQLTNKYAEGYPGKRYYGGCEYVDKAEALAIDRACQLFGCEYANVQPHSGSQANSAVYMALLNPGDTVLGMSLAHGGHLTHGSPVNFSGKHYNVIPYGIDEAGQINYDEMETLALEHKPKMIIGGFSAYSQIVDWKRMREIADKVDAYLFVDMAHVAGLIAAGEYPTPVPHAHVVTTTTHKTLAGPRGGLILSNAGEDMYKKLNSAVFPGGQGGPLMHVIAGKAVAFKEAMEPEFKAYQARVVKNAKAMVAQFQERGYKIVSNGTENHLFLVDLIDKDITGKDADAALGAANITVNKNSVPNDPRSPFVTSGIRVGTPAITRRGFTEADAKELANWMCDVLDNIGNEAVIEATKQKVLEICKRLPVYA.

Residues L121 and 125-127 contribute to the (6S)-5,6,7,8-tetrahydrofolate site; that span reads GHL. K229 bears the N6-(pyridoxal phosphate)lysine mark. Residues E245 and 354–356 each bind (6S)-5,6,7,8-tetrahydrofolate; that span reads SPF.

It belongs to the SHMT family. Homodimer. Pyridoxal 5'-phosphate is required as a cofactor.

It localises to the cytoplasm. It catalyses the reaction (6R)-5,10-methylene-5,6,7,8-tetrahydrofolate + glycine + H2O = (6S)-5,6,7,8-tetrahydrofolate + L-serine. It functions in the pathway one-carbon metabolism; tetrahydrofolate interconversion. Its pathway is amino-acid biosynthesis; glycine biosynthesis; glycine from L-serine: step 1/1. In terms of biological role, catalyzes the reversible interconversion of serine and glycine with tetrahydrofolate (THF) serving as the one-carbon carrier. This reaction serves as the major source of one-carbon groups required for the biosynthesis of purines, thymidylate, methionine, and other important biomolecules. Also exhibits THF-independent aldolase activity toward beta-hydroxyamino acids, producing glycine and aldehydes, via a retro-aldol mechanism. The chain is Serine hydroxymethyltransferase 1 from Vibrio vulnificus (strain CMCP6).